A 648-amino-acid polypeptide reads, in one-letter code: Biosynthetic arginine decarboxylase (648 aa).

Position 109 is an N6-(pyridoxal phosphate)lysine (K109). 291 to 301 (IDVGGGLGIDF) contacts substrate.

This sequence belongs to the Orn/Lys/Arg decarboxylase class-II family. SpeA subfamily. It depends on Mg(2+) as a cofactor. Pyridoxal 5'-phosphate is required as a cofactor.

The catalysed reaction is L-arginine + H(+) = agmatine + CO2. The protein operates within amine and polyamine biosynthesis; agmatine biosynthesis; agmatine from L-arginine: step 1/1. In terms of biological role, catalyzes the biosynthesis of agmatine from arginine. The polypeptide is Biosynthetic arginine decarboxylase (Prochlorococcus marinus (strain MIT 9301)).